The chain runs to 197 residues: Isopentenyl-diphosphate Delta-isomerase (197 aa).

Residues histidine 41 and histidine 48 each contribute to the Mn(2+) site. The 138-residue stretch at 46–183 folds into the Nudix hydrolase domain; the sequence is QLHRAFSVFL…SWFMTVLDAA (138 aa). Cysteine 83 is an active-site residue. Cysteine 83 provides a ligand contact to Mg(2+). Position 85 (histidine 85) interacts with Mn(2+). A Mg(2+)-binding site is contributed by glutamate 103. Mn(2+)-binding residues include glutamate 130 and glutamate 132. Glutamate 132 is an active-site residue.

This sequence belongs to the IPP isomerase type 1 family. The cofactor is Mg(2+). Mn(2+) is required as a cofactor.

The protein localises to the cytoplasm. It catalyses the reaction isopentenyl diphosphate = dimethylallyl diphosphate. It functions in the pathway isoprenoid biosynthesis; dimethylallyl diphosphate biosynthesis; dimethylallyl diphosphate from isopentenyl diphosphate: step 1/1. Functionally, catalyzes the 1,3-allylic rearrangement of the homoallylic substrate isopentenyl (IPP) to its highly electrophilic allylic isomer, dimethylallyl diphosphate (DMAPP). This chain is Isopentenyl-diphosphate Delta-isomerase, found in Streptomyces avermitilis (strain ATCC 31267 / DSM 46492 / JCM 5070 / NBRC 14893 / NCIMB 12804 / NRRL 8165 / MA-4680).